Reading from the N-terminus, the 176-residue chain is MASTTSRSARPARRNNKASGNTTPLLWMAFALLVVVLDQFFKIVIVRTFTYGESRPVTRFFNLVLVYNKGAAFSFLADAGGWQRWFFTGLGLVVGAFIVWLLYRHTGQKLFCFAVSLILGGAVGNVVDRVVYGHVIDFLDFYVRNYHWPAFNVADCAITVGAVLLIVDELRRVRKH.

Transmembrane regions (helical) follow at residues 26-46 (LWMA…IVIV), 60-80 (FFNL…ADAG), 82-102 (WQRW…VWLL), and 107-127 (GQKL…GNVV). Residues aspartate 137 and aspartate 155 contribute to the active site. A helical transmembrane segment spans residues 147–167 (HWPAFNVADCAITVGAVLLIV).

It belongs to the peptidase A8 family.

The protein resides in the cell inner membrane. The enzyme catalyses Release of signal peptides from bacterial membrane prolipoproteins. Hydrolyzes -Xaa-Yaa-Zaa-|-(S,diacylglyceryl)Cys-, in which Xaa is hydrophobic (preferably Leu), and Yaa (Ala or Ser) and Zaa (Gly or Ala) have small, neutral side chains.. Its pathway is protein modification; lipoprotein biosynthesis (signal peptide cleavage). Functionally, this protein specifically catalyzes the removal of signal peptides from prolipoproteins. The sequence is that of Lipoprotein signal peptidase from Cupriavidus pinatubonensis (strain JMP 134 / LMG 1197) (Cupriavidus necator (strain JMP 134)).